We begin with the raw amino-acid sequence, 638 residues long: Rik1-associated factor 1 (638 aa).

4 WD repeats span residues 297–336, 486–525, 544–583, and 587–626; these read KEYS…CGIF, TTQK…KPLS, EVDA…PFIQ, and EMNS…GNKF.

In terms of assembly, component of the Clr4 methyltransferase complex (ClrC) composed of at least clr4, rik1, pcu4, rbx1, raf1 and raf2. The cullin pcu4, rik1, raf1, raf2 and the ring-box protein rbx1 are components of an E3 ubiquitin ligase, whose activity is essential for heterochromatin assembly. Interacts with nup189.

It is found in the cytoplasm. The protein localises to the nucleus. Its subcellular location is the chromosome. Component of the Clr4 methyltransferase complex (ClrC) which contributes to the establishment of heterochromatin by specifically methylating histone H3 to form H3K9me. ClrC preferentially ubiquitylates H3K14 and ClrC-mediated H3 ubiquitination promotes clr4 methyltransferase activity for the methylation of H3K9. H3K9me represents a specific tag for epigenetic transcriptional repression by recruiting swi6/HP1 to methylated histones which leads to transcriptional silencing within centromeric heterochromatin, telomeric regions and at the silent mating-type loci. Has a role in both mitotic and meiotic chromosome segregation. The chain is Rik1-associated factor 1 (raf1) from Schizosaccharomyces pombe (strain 972 / ATCC 24843) (Fission yeast).